The primary structure comprises 440 residues: MQIATSSTSPSIFYTPSISPMEEDMNCQELVVNLYTCQVCALPAHGNHFGAISCRACAAFFRRACTGTKTTYKCKKQNNCDIWENGRYKCKKCRLDRCNEVGMDPGRFQFDRDLISATEKYPNSKNFRRTFGMSRLPETIEHFLGRPHFIIFLERHIYSHSEKNFVDLQHLIAKASKLLELGSEKPLIARNNLEKLALGLNLVRDQPAGSHDVQLVTKLGKDEALTFWETDFLTVAKWLTYFDDFQLLPHNQQILLLKSVWHVWNRLEKLALTATSRRQNVCEQKQLMLTYNSVCNPKTIELDYSWFTKYPKEQLCFFFDEMEDYMLTSALDPLTSLEPTDIELTYMLCQLCFHYAGKRYGGEILEVTEKFQENLADNLHDYYVNELNMPRYCGRLNQMLKINNLIQQDIWEKRAKHELAKVFDIFCIEFSHPEMFEDTG.

Positions 34–110 form a DNA-binding region, nuclear receptor; it reads LYTCQVCALP…VGMDPGRFQF (77 aa). 2 consecutive NR C4-type zinc fingers follow at residues 37–57 and 74–93; these read CQVC…CRAC and CKKQ…CKKC. Residues 184-439 form the NR LBD domain; sequence EKPLIARNNL…FSHPEMFEDT (256 aa).

Belongs to the nuclear hormone receptor family.

The protein resides in the nucleus. Functionally, orphan nuclear receptor. The polypeptide is Nuclear hormone receptor family member nhr-130 (nhr-130) (Caenorhabditis elegans).